The sequence spans 532 residues: Pentatricopeptide repeat-containing protein At5g66500, mitochondrial (532 aa).

The N-terminal 33 residues, M1–F33, are a transit peptide targeting the mitochondrion. 12 PPR repeats span residues D48–L82, S83–T117, G118–K148, D149–I183, S184–L218, T223–H248, D250–N280, V281–S314, D315–K345, S346–V380, N383–K413, and G419–S453. The segment at I458–I532 is type E motif; degenerate.

It belongs to the PPR family. PCMP-E subfamily.

The protein localises to the mitochondrion. This chain is Pentatricopeptide repeat-containing protein At5g66500, mitochondrial (PCMP-E38), found in Arabidopsis thaliana (Mouse-ear cress).